Reading from the N-terminus, the 202-residue chain is Large ribosomal subunit protein bL9 (202 aa).

The interval 176-202 (AAGEFFDPDAQHDDEPAAEDDQNAEEK) is disordered. A compositionally biased stretch (acidic residues) spans 191–202 (PAAEDDQNAEEK).

This sequence belongs to the bacterial ribosomal protein bL9 family.

Functionally, binds to the 23S rRNA. The polypeptide is Large ribosomal subunit protein bL9 (Nitrobacter winogradskyi (strain ATCC 25391 / DSM 10237 / CIP 104748 / NCIMB 11846 / Nb-255)).